The chain runs to 458 residues: Elongation factor 1-alpha (458 aa).

Gly-2 carries the n,N,N-trimethylglycine; by EFM7 modification. N6,N6-dimethyllysine; by EFM7; alternate is present on Lys-3. Lys-3 carries the N6-methyllysine; by EFM7; alternate modification. Positions 5–240 constitute a tr-type G domain; the sequence is KSHINVVVIG…DAIEQPSRPT (236 aa). Residues 14–21 form a G1 region; it reads GHVDSGKS. Residue Ser-18 is modified to Phosphoserine. GTP-binding residues include Ser-21 and Thr-22. Lys-30 carries the post-translational modification N6-methyllysine; by EFM1. A G2 region spans residues 70 to 74; the sequence is GITID. Thr-72 is modified (phosphothreonine). The residue at position 79 (Lys-79) is an N6,N6,N6-trimethyllysine; by EFM5. Thr-82 carries the post-translational modification Phosphothreonine. The G3 stretch occupies residues 91 to 94; it reads DAPG. GTP is bound by residues Asn-153, Lys-154, and Asp-156. Residues 153 to 156 form a G4 region; the sequence is NKMD. Residue Ser-163 is modified to Phosphoserine. GTP-binding residues include Ser-192, Gly-193, and Trp-194. Positions 192-194 are G5; it reads SGW. Glycyl lysine isopeptide (Lys-Gly) (interchain with G-Cter in ubiquitin) cross-links involve residues Lys-224, Lys-242, and Lys-253. Residue Thr-259 is modified to Phosphothreonine. Residue Lys-271 forms a Glycyl lysine isopeptide (Lys-Gly) (interchain with G-Cter in ubiquitin) linkage. A Phosphoserine modification is found at Ser-289. Lys-316 is subject to N6,N6-dimethyllysine; by EFM4; alternate. Lys-316 carries the post-translational modification N6-methyllysine; by EFM4; alternate. Residue Lys-390 is modified to N6-methyllysine; by EFM6. A Glycyl lysine isopeptide (Lys-Gly) (interchain with G-Cter in ubiquitin) cross-link involves residue Lys-393. A Phosphoserine modification is found at Ser-414. Residue Thr-430 is modified to Phosphothreonine. A Glycyl lysine isopeptide (Lys-Gly) (interchain with G-Cter in ubiquitin) cross-link involves residue Lys-437. Lys-458 carries the lysine methyl ester modification.

The protein belongs to the TRAFAC class translation factor GTPase superfamily. Classic translation factor GTPase family. EF-Tu/EF-1A subfamily. The eukaryotic elongation factor 1 complex (eEF1) is probably a heterohexamer. Two trimeric complexes, each composed of eEF1A (TEF1 or TEF2), eEF1Balpha (EFB1) and eEF1Bgamma (CAM1 or TEF4), are probably dimerized via the eF1Bgamma subunits. Interacts with eEF1Balpha; the interaction is direct. Interacts with GCN2 (via C-terminus); this interaction is direct, occurs in amino acid-repleted cells, may be stabilized in a ribosome-dependent manner, reduces GCN2-mediated eIF-2-alpha phosphorylation and is lost in amino acid-starved cells and by uncharged tRNAs. Interacts with CEX1. Interacts with elongation factor 3 (YEF3 or HEF3). Interacts with NAP1. Interacts with SRV2. Interacts with chaperone ZPR1; the interaction is required for its proper folding. Binds to actin and forms a ternary complex with BNI1 and profilin. Interacts with the proteasome, probably via RPT1. Associates with ribosomes. Post-translationally, S-thiolated in response to oxidative stress, probably inhibiting the protein and causing a reduction in protein synthesis. In terms of processing, glutaminylated at Glu-45. An L-glutamine is linked to Glu-45 via the alpha amino group. This glutaminylation is yeast-specific and not essential for the normal functions of eEF1A. However, eEF1A glutaminylation slightly reduced growth under antibiotic-induced translational stress conditions.

The protein localises to the cytoplasm. It is found in the cytoskeleton. Its pathway is protein biosynthesis; polypeptide chain elongation. With respect to regulation, inhibited by narciclasine. In terms of biological role, GTP-binding component of the eukaryotic elongation factor 1 complex (eEF1). In its active GTP-bound form, binds to and delivers aminoacyl-tRNA to the A-site of ribosomes during protein biosynthesis. In the presence of a correct codon-anticodon match between the aminoacyl-tRNA and the A-site codon of the ribosome-bound mRNA, the ribosome acts as a GTPase activator and the GTP is hydrolyzed. The inactive GDP-bound form leaves the ribosome and must be recycled by its guanine nucleotide exchange factor (GEF) (eEF1B subcomplex) before binding another molecule of aminoacyl-tRNA. Required for nuclear export of aminoacyl-tRNAs. May also be involved in translational quality control by targeting cotranslationally damaged proteins to the proteasome. Also exhibits actin filament-binding and -bundling activities and is involved in cytoskeleton organization. Plays a role as a negative regulator of GCN2 kinase activity by inhibiting GCN2-mediated eIF-2-alpha phosphorylation in amino acid-repleted cells. In Saccharomyces cerevisiae (strain ATCC 204508 / S288c) (Baker's yeast), this protein is Elongation factor 1-alpha (TEF1).